The following is a 266-amino-acid chain: Nickel import ATP-binding protein NikE (266 aa).

An ABC transporter domain is found at 4–252 (ISADNIVKIY…RHPASRLLRE (249 aa)). 45–52 (GRSGCGKS) serves as a coordination point for ATP.

The protein belongs to the ABC transporter superfamily. Nickel importer (TC 3.A.1.5.3) family. As to quaternary structure, the complex is composed of two ATP-binding proteins (NikD and NikE), two transmembrane proteins (NikB and NikC) and a solute-binding protein (NikA).

It is found in the cell inner membrane. It carries out the reaction Ni(2+)(out) + ATP + H2O = Ni(2+)(in) + ADP + phosphate + H(+). Its function is as follows. Part of the ABC transporter complex NikABCDE involved in nickel import. Responsible for energy coupling to the transport system. This is Nickel import ATP-binding protein NikE from Brucella suis biovar 1 (strain 1330).